Reading from the N-terminus, the 385-residue chain is Transcription factor TGAL3 (385 aa).

The interval Leu-62–Arg-113 is disordered. Basic and acidic residues predominate over residues Ser-87 to Met-96. In terms of domain architecture, bZIP spans Asp-93–Arg-137. The basic motif stretch occupies residues Lys-95–Lys-115. Positions Leu-121–Leu-135 are leucine-zipper. The DOG1 domain occupies Thr-162–Arg-382.

The protein belongs to the bZIP family. In terms of assembly, interacts with NPR1/NH1, NPR2/NH2 and NPR3/NH3.

The protein resides in the nucleus. Functionally, transcriptional regulator involved in defense response. The protein is Transcription factor TGAL3 of Oryza sativa subsp. japonica (Rice).